The sequence spans 100 residues: Co-chaperonin GroES (100 aa).

It belongs to the GroES chaperonin family. As to quaternary structure, heptamer of 7 subunits arranged in a ring. Interacts with the chaperonin GroEL.

It localises to the cytoplasm. In terms of biological role, together with the chaperonin GroEL, plays an essential role in assisting protein folding. The GroEL-GroES system forms a nano-cage that allows encapsulation of the non-native substrate proteins and provides a physical environment optimized to promote and accelerate protein folding. GroES binds to the apical surface of the GroEL ring, thereby capping the opening of the GroEL channel. This is Co-chaperonin GroES from Nocardia farcinica (strain IFM 10152).